Consider the following 411-residue polypeptide: Secretion apparatus protein BsaZ (411 aa).

The next 4 helical transmembrane spans lie at 28–48 (IVAL…VDLT), 80–100 (IAAP…LVQS), 137–157 (ALLY…LYHA), and 175–195 (IVLT…VLIL). Residues 341-411 (AANRGGPPPE…APARTGDQNA (71 aa)) are disordered. Residues 370 to 404 (DACADNAFPDDAPPGAAAPNAGSPDGPAPDGGAPA) show a composition bias toward low complexity.

The protein belongs to the type III secretion exporter family.

It is found in the cell membrane. Functionally, part of the bsa type III secretion system, is involved in the intracellular replication of invading bacteria inside the host cell. Probably necessary for the lysis of the vacuole membrane and escape into the host cell cytoplasm. The polypeptide is Secretion apparatus protein BsaZ (bsaZ) (Burkholderia pseudomallei (strain K96243)).